We begin with the raw amino-acid sequence, 505 residues long: Lysine--tRNA ligase 1 (505 aa).

Residues Asp-415 and Glu-422 each contribute to the Mg(2+) site.

The protein belongs to the class-II aminoacyl-tRNA synthetase family. As to quaternary structure, homodimer. Mg(2+) serves as cofactor.

The protein resides in the cytoplasm. It carries out the reaction tRNA(Lys) + L-lysine + ATP = L-lysyl-tRNA(Lys) + AMP + diphosphate. In Mycobacterium bovis (strain ATCC BAA-935 / AF2122/97), this protein is Lysine--tRNA ligase 1 (lysS1).